Reading from the N-terminus, the 94-residue chain is Large ribosomal subunit protein uL29 (94 aa).

The disordered stretch occupies residues 65-94 (ANPGERKSRVFSRAKRKKKNLARLSAKAKG). Positions 73–94 (RVFSRAKRKKKNLARLSAKAKG) are enriched in basic residues.

The protein belongs to the universal ribosomal protein uL29 family.

The chain is Large ribosomal subunit protein uL29 from Leptospira interrogans serogroup Icterohaemorrhagiae serovar copenhageni (strain Fiocruz L1-130).